The chain runs to 511 residues: MSAQMFESFKVNSPNVKYTDEHIISDYTYQTTKVQNVNGELIVEPVDQKYIFKTERKVPRMGVMIVGLCGNNGTTVVGGVIANREGLCWNTKQGLQTPNYFGSVVMSSTIRMGMDENGCDAYIPLKNLIPMVHPNDIVFGGWDINNANLADAMQRAQVFDYDLQVQLIPHMKNITPLPSIYFPDFIAANQKDRANNVLTGTKKEQMEQIRKDIRDFKESNKLDTVVVMWSANTERFSSLVPGVNDTIENLMAAIDRSEEEISPSTLFAVASILENTTYINGSPQNTFVPAVVDLAIQHNVSIGGDDFKTGQTKIKSVLTDYLVSAGIKPVSIVSYNHLGNNDGKNLSAPQQFRSKEITKSNVVDDMIASNNILYKQGEHPDHVIVIKYVPYVGDSKRAMDEYTSQIFMGGHNTIVLHNTCEDSLLAAPIILDLVILAEVTSRITMKKQDDDQFATFHPVLSLLSYLLKAPIVPKHATVVNALFKQRACIENIFKACVGIAPDNNMLLEQRL.

Gly70, Asn71, Asn72, Asp143, Ser179, Ile180, Gln190, Arg193, Ser230, Ala231, Asn232, Thr233, Gly281, Ser282, Asp306, Thr309, Asn340, Asn341, Asp342, Lys355, Gly393, Asp394, Asp422, and Ser423 together coordinate NAD(+).

The protein belongs to the myo-inositol 1-phosphate synthase family. The cofactor is NAD(+).

It is found in the cytoplasm. It carries out the reaction D-glucose 6-phosphate = 1D-myo-inositol 3-phosphate. The protein operates within polyol metabolism; myo-inositol biosynthesis; myo-inositol from D-glucose 6-phosphate: step 1/2. Key enzyme in myo-inositol biosynthesis pathway that catalyzes the conversion of glucose 6-phosphate to 1-myo-inositol 1-phosphate in a NAD-dependent manner. Rate-limiting enzyme in the synthesis of all inositol-containing compounds. The protein is Inositol-3-phosphate synthase (ino1) of Dictyostelium discoideum (Social amoeba).